The sequence spans 144 residues: L-fucose mutarotase (144 aa).

His-22 serves as the catalytic Proton donor. Substrate-binding positions include Asp-30, Arg-109, and Tyr-131–Asn-133.

Belongs to the RbsD / FucU family. FucU mutarotase subfamily. As to quaternary structure, homodecamer.

Its subcellular location is the cytoplasm. The enzyme catalyses alpha-L-fucose = beta-L-fucose. It functions in the pathway carbohydrate metabolism; L-fucose metabolism. Its function is as follows. Involved in the anomeric conversion of L-fucose. This Haemophilus influenzae (strain PittEE) protein is L-fucose mutarotase.